Here is a 546-residue protein sequence, read N- to C-terminus: Chaperonin GroEL (546 aa).

Residues 30 to 33 (TLGP), Lys-51, 87 to 91 (DGTTT), Gly-415, 479 to 481 (NAA), and Asp-495 each bind ATP. A disordered region spans residues 527–546 (DKPAAPPMPGGMGGMGGMDF). Gly residues predominate over residues 536 to 546 (GGMGGMGGMDF).

Belongs to the chaperonin (HSP60) family. In terms of assembly, forms a cylinder of 14 subunits composed of two heptameric rings stacked back-to-back. Interacts with the co-chaperonin GroES.

It localises to the cytoplasm. It carries out the reaction ATP + H2O + a folded polypeptide = ADP + phosphate + an unfolded polypeptide.. In terms of biological role, together with its co-chaperonin GroES, plays an essential role in assisting protein folding. The GroEL-GroES system forms a nano-cage that allows encapsulation of the non-native substrate proteins and provides a physical environment optimized to promote and accelerate protein folding. The sequence is that of Chaperonin GroEL from Bordetella petrii (strain ATCC BAA-461 / DSM 12804 / CCUG 43448).